The sequence spans 390 residues: Lipid droplet-regulating VLDL assembly factor AUP1 homolog (390 aa).

Residues 1–32 (MASPEASSSGNTEDLRIEDLFHQKRNEDTIAK) lie on the Cytoplasmic side of the membrane. The stretch at 33 to 53 (IFSIIYAPVGLIILLIRVFLG) is an intramembrane region. Residues 54 to 390 (FHTFIVACLL…NRQKYMNRDS (337 aa)) are Cytoplasmic-facing. The CUE domain maps to 305–347 (QMDECAMRIKQSFPSFHLSAIRRDLEKTRSQTTTVNNLKAGKI).

This sequence belongs to the AUP1 family.

The protein resides in the endoplasmic reticulum membrane. It is found in the lipid droplet. The chain is Lipid droplet-regulating VLDL assembly factor AUP1 homolog from Caenorhabditis elegans.